The following is a 204-amino-acid chain: Ribosome maturation factor RimP (204 aa).

The protein belongs to the RimP family.

The protein resides in the cytoplasm. Functionally, required for maturation of 30S ribosomal subunits. The protein is Ribosome maturation factor RimP of Albidiferax ferrireducens (strain ATCC BAA-621 / DSM 15236 / T118) (Rhodoferax ferrireducens).